The primary structure comprises 702 residues: MERPQKMPKVAKVKNKAPAEVQITAEQLLREAKERDLEILPPPPKQKISDPAELADYQQRKRKTFEDNLRKNRMVVSHWIKYAQWEEQQQEIQRARSIWERALDNEHRNVTLWLKYAEMEMKNKQVNHARNLWDRAVTIMPRVNQFWYKYTYMEEMLENVAGARQVFERWMEWQPEEQAWQTYVNFELRYKEIDRAREIYERFVYVHPDVKNWIKFARFEESHGFIHGSRRVFERAVEFFGDDYIEERLFIAFARFEEGQKEHDRARIIYKYALDHLPKDRTQELFKAYTKHEKKYGDRAGIEDVIVSKRKYQYEQEVAANPTNYDAWFDYLRLIEAEGDRDQIRETYERAISNVPPANEKNFWRRYIYLWINYALYEELEAEDAERTRQIYKTCLELIPHKQFTFSKLWLLYAQFEIRCKELQRARKALGLAIGMCPRDKLFRGYIDLEIQLREFERCRMLYEKFLEFGPENCVTWMKFAELENLLGDTDRARAIFELAVQQPRLDMPELLWKAYIDFEVALGETELARQLYERLLERTQHVKVWMSFAKFEMGLSHGDSGPDAELNVQLARRIYERANEMLRQLGDKESRVLLLEAWRDFERDASDSQEMQKVMDKMPRRIKKRQKIVSDNGVEEGWEEVFDYIFPEDEMARPNLKLLAAAKMWKTQKDNTVDDPPATAIASEPEPAADAAPADTTDSGD.

13 HAT repeats span residues 56-88, 90-122, 124-156, 158-189, 191-222, 224-259, 261-295, 305-337, 339-373, 383-419, 454-486, 488-522, and 524-555; these read DYQQ…WEEQ, QEIQ…MEMK, KQVN…MEEM, ENVA…FELR, KEID…FEES, GFIH…FEEG, KEHD…HEKK, VIVS…LIEA, GDRD…LWIN, EDAE…FEIR, REFE…LENL, GDTD…FEVA, and GETE…FEMG. A Nuclear localization signal motif is present at residues 620–628; that stretch reads PRRIKKRQK. Residues 670–702 form a disordered region; sequence KDNTVDDPPATAIASEPEPAADAAPADTTDSGD. Residues 683–702 show a composition bias toward low complexity; that stretch reads ASEPEPAADAAPADTTDSGD.

Belongs to the crooked-neck family. Colocalizes with a complex containing snRNP proteins. In terms of tissue distribution, transcribed in all cells during embryonic development.

Its subcellular location is the nucleus speckle. In terms of biological role, may be involved in pre-mRNA splicing process. Involved in embryonic neurogenesis and cell rearrangement during Malpighian tubule morphogenesis. The polypeptide is Protein crooked neck (crn) (Drosophila melanogaster (Fruit fly)).